A 506-amino-acid polypeptide reads, in one-letter code: Methylthioalkylmalate synthase 1, chloroplastic (506 aa).

Residues 1 to 49 (MASSLLTSSVMIPTTGSTVVGRSVLPFQSSLHSLRLTHSYKNPALFISC) constitute a chloroplast transit peptide. One can recognise a Pyruvate carboxyltransferase domain in the interval 85-359 (VRVFDTTLRD…YTKIDTRQIM (275 aa)). At Ser98 the chain carries Phosphoserine.

The protein belongs to the alpha-IPM synthase/homocitrate synthase family. In terms of assembly, monomer. Requires Mn(2+) as cofactor. In terms of tissue distribution, highly expressed in leaves, flowers, roots and siliques. Not detected in flowers in PubMed:12432038.

The protein localises to the plastid. The protein resides in the chloroplast. It catalyses the reaction an omega-(methylsulfanyl)-2-oxoalkanoate + acetyl-CoA + H2O = a 2-(omega-methylsulfanyl)alkylmalate + CoA + H(+). 1 mM DTT required for activity. Activated by ATP and inhibited by iodoacetamide. Its function is as follows. Determines the side chain length of aliphatic glucosinolate structures. Catalyzes exclusively the condensation reactions of both the first and second methionine carbon chain elongation. This is Methylthioalkylmalate synthase 1, chloroplastic (MAM1) from Arabidopsis thaliana (Mouse-ear cress).